We begin with the raw amino-acid sequence, 267 residues long: Undecaprenyl-diphosphatase (267 aa).

The next 7 membrane-spanning stretches (helical) occupy residues 1 to 21 (MSLF…FLPI), 40 to 60 (GQAI…LYFW), 85 to 105 (LAFL…FLEV), 112 to 132 (LRSI…LYWA), 189 to 209 (AMLM…AEVI), 219 to 239 (DGAI…TLMF), and 245 to 265 (VSFT…LVIA).

This sequence belongs to the UppP family.

It localises to the cell inner membrane. The catalysed reaction is di-trans,octa-cis-undecaprenyl diphosphate + H2O = di-trans,octa-cis-undecaprenyl phosphate + phosphate + H(+). Catalyzes the dephosphorylation of undecaprenyl diphosphate (UPP). Confers resistance to bacitracin. In Jannaschia sp. (strain CCS1), this protein is Undecaprenyl-diphosphatase.